Consider the following 316-residue polypeptide: ATP synthase gamma chain (316 aa).

This sequence belongs to the ATPase gamma chain family. F-type ATPases have 2 components, CF(1) - the catalytic core - and CF(0) - the membrane proton channel. CF(1) has five subunits: alpha(3), beta(3), gamma(1), delta(1), epsilon(1). CF(0) has three main subunits: a, b and c.

The protein resides in the cellular thylakoid membrane. Its function is as follows. Produces ATP from ADP in the presence of a proton gradient across the membrane. The gamma chain is believed to be important in regulating ATPase activity and the flow of protons through the CF(0) complex. This Prochlorococcus marinus (strain MIT 9313) protein is ATP synthase gamma chain.